A 530-amino-acid polypeptide reads, in one-letter code: Alpha-(1,3)-fucosyltransferase 4 (530 aa).

Disordered stretches follow at residues 1–48 (MRRL…RAVP) and 66–113 (HLGG…TPAD). The Cytoplasmic portion of the chain corresponds to 1-147 (MRRLWGAARK…GGRRRWRRGR (147 aa)). Over residues 88-106 (ASGERQRRLEPQLQHESRC) the composition is skewed to basic and acidic residues. A helical; Signal-anchor for type II membrane protein membrane pass occupies residues 148-172 (GLPWTVCVLAAAGLTCTALITYACW). The Lumenal segment spans residues 173-530 (GQLPPLPWAS…IRNLASWFER (358 aa)). N-linked (GlcNAc...) asparagine glycosylation is found at Asn216 and Asn315.

It belongs to the glycosyltransferase 10 family.

Its subcellular location is the golgi apparatus. It is found in the golgi stack membrane. The enzyme catalyses a beta-D-galactosyl-(1-&gt;4)-N-acetyl-beta-D-glucosaminyl derivative + GDP-beta-L-fucose = a beta-D-galactosyl-(1-&gt;4)-[alpha-L-fucosyl-(1-&gt;3)]-N-acetyl-beta-D-glucosaminyl derivative + GDP + H(+). It catalyses the reaction an N-acetyl-alpha-neuraminyl-(2-&gt;3)-beta-D-galactosyl-(1-&gt;4)-N-acetyl-beta-D-glucosaminyl derivative + GDP-beta-L-fucose = an alpha-Neu5Ac-(2-&gt;3)-beta-D-Gal-(1-&gt;4)-[alpha-L-Fuc-(1-&gt;3)]-beta-D-GlcNAc derivative + GDP + H(+). It carries out the reaction an alpha-Neu5Ac-(2-&gt;3)-beta-D-Gal-(1-&gt;4)-beta-D-GlcNAc-(1-&gt;3)-beta-D-Gal-(1-&gt;4)-beta-D-GlcNAc derivative + GDP-beta-L-fucose = an alpha-Neu5Ac-(2-&gt;3)-beta-D-Gal-(1-&gt;4)-beta-D-GlcNAc-(1-&gt;3)-beta-D-Gal-(1-&gt;4)-[alpha-L-Fuc-(1-&gt;3)]-beta-D-GlcNAc derivative + GDP + H(+). The catalysed reaction is an alpha-Neu5Ac-(2-&gt;3)-beta-D-Gal-(1-&gt;4)-beta-D-GlcNAc6S derivative + GDP-beta-L-fucose = an alpha-Neu5Ac-(2-&gt;3)-beta-D-Gal-(1-&gt;4)-[alpha-L-Fuc-(1-&gt;3)]-beta-D-GlcNAc6S derivative + GDP + H(+). The protein operates within protein modification; protein glycosylation. In terms of biological role, catalyzes alpha(1-&gt;3) linkage of fucosyl moiety transferred from GDP-beta-L-fucose to N-acetyl glucosamine (GlcNAc) within type 2 lactosamine (LacNAc, Gal-beta(1-&gt;4)GlcNAc) glycan attached to N- or O-linked glycoproteins. Robustly fucosylates nonsialylated distal LacNAc unit of the polylactosamine chain to form Lewis X antigen (CD15), a glycan determinant known to mediate important cellular functions in development and immunity. Fucosylates with lower efficiency sialylated LacNAc acceptors to form sialyl Lewis X and 6-sulfo sialyl Lewis X determinants that serve as recognition epitopes for C-type lectins. Together with FUT7 contributes to SELE, SELL and SELP selectin ligand biosynthesis and selectin-dependent lymphocyte homing, leukocyte migration and blood leukocyte homeostasis. In a cell type specific manner, may also fucosylate the internal LacNAc unit of the polylactosamine chain to form VIM-2 antigen that serves as recognition epitope for SELE. The protein is Alpha-(1,3)-fucosyltransferase 4 (FUT4) of Pan troglodytes (Chimpanzee).